A 391-amino-acid chain; its full sequence is Serpin B13 (391 aa).

It belongs to the serpin family. Ov-serpin subfamily. As to expression, skin specific.

The protein resides in the cytoplasm. May play a role in the proliferation or differentiation of keratinocytes. This Homo sapiens (Human) protein is Serpin B13 (SERPINB13).